The following is a 119-amino-acid chain: MYKPFDLRTIITIIIGCGILTAMFLLIGLVLCLYSKISKALKSPGIAKEADDECYIDPCKDPHESIILANSIPAEACHSYQANTIAVASCGPLQCCNVCGVYADVNSLPPCLCSIREGL.

The signal sequence occupies residues 1-40; it reads MYKPFDLRTIITIIIGCGILTAMFLLIGLVLCLYSKISKA.

This sequence belongs to the FAM24 family.

The protein resides in the secreted. The polypeptide is Protein FAM24A-like (Mus musculus (Mouse)).